Consider the following 159-residue polypeptide: Phosphopantetheine adenylyltransferase (159 aa).

A substrate-binding site is contributed by T8. Residues 8 to 9 (TF) and H16 contribute to the ATP site. Residues K40, T72, and R86 each contribute to the substrate site. Residues 87 to 89 (GLR), E97, and 122 to 128 (YSFLSSS) contribute to the ATP site.

This sequence belongs to the bacterial CoaD family. As to quaternary structure, homohexamer. Requires Mg(2+) as cofactor.

The protein resides in the cytoplasm. The catalysed reaction is (R)-4'-phosphopantetheine + ATP + H(+) = 3'-dephospho-CoA + diphosphate. It participates in cofactor biosynthesis; coenzyme A biosynthesis; CoA from (R)-pantothenate: step 4/5. Its function is as follows. Reversibly transfers an adenylyl group from ATP to 4'-phosphopantetheine, yielding dephospho-CoA (dPCoA) and pyrophosphate. The protein is Phosphopantetheine adenylyltransferase of Prochlorococcus marinus subsp. pastoris (strain CCMP1986 / NIES-2087 / MED4).